Consider the following 342-residue polypeptide: MDILKSEILRKRQLVEDRNLLVENKKYFKRSELAKKEEEAYFERCGYKVQPKEDDQKPLTSSNPVLELELAEEKLPMTLSRQEVIRRLRERGEPMRLFGETDYDAFQRLRKIEILTPEVNKGLRNDLKAALDKIDQQYLNEIVGGQEPGEEDTQNDLKVHEENTTIEELEALGESLGKGDDHKDMDIITKFLKFLLGVWAKELNSREDYVKRSVQGKLNSATQKQTESYLRPLFRKLRKRNLPADIKESITDIIKFMLQREYVKANDAYLQMAIGNAPWPIGVTMVGIHARTGREKIFSKHVAHVLNDETQRKYIQGLKRLMTICQKHFPTDPSKCVEYNAL.

The residue at position 1 (Met1) is an N-acetylmethionine.

It belongs to the PRP18 family. Heterodimer with PPIH. Interacts with PRPF4 and with the spliceosome. Part of a complex containing U4/U6 snRNPs. Also detected in the cytoplasm. As to expression, detected in brain, heart, liver and skeletal muscle.

It localises to the nucleus speckle. Its function is as follows. Participates in the second step of pre-mRNA splicing. Down-regulates the expression of potassium channel subunits. In Rattus norvegicus (Rat), this protein is Pre-mRNA-splicing factor 18 (Prpf18).